Consider the following 690-residue polypeptide: Ras guanyl-releasing protein 3 (690 aa).

The 123-residue stretch at 3–125 folds into the N-terminal Ras-GEF domain; the sequence is SSGLGKAATL…SLIDISSIPS (123 aa). The 232-residue stretch at 152-383 folds into the Ras-GEF domain; the sequence is EPIELAEHLT…YKLSLVLEPR (232 aa). EF-hand domains follow at residues 420 to 455 and 458 to 484; these read HIRKLVESVFRNYDHDHDGYISQEDFESIAANFPFL and FCVLDKDQDGLISKDEMMAYFLRAKSQ. Ca(2+)-binding residues include Asp-433, Asp-435, Asp-437, Tyr-439, Asp-444, Asp-462, Asp-464, Asp-466, and Glu-473. The segment at 494–544 adopts a Phorbol-ester/DAG-type zinc-finger fold; that stretch reads IHNFQEMTYLKPTFCEHCAGFLWGIIKQGYKCKDCGANCHKQCKDLLVLAC. The disordered stretch occupies residues 667 to 690; that stretch reads VDRGTEFELDQDEGEETRQDGEDG.

This sequence belongs to the RASGRP family.

Guanine nucleotide exchange factor (GEF) for Ras and Rap1. In Homo sapiens (Human), this protein is Ras guanyl-releasing protein 3 (RASGRP3).